The primary structure comprises 88 residues: Eclosion hormone (88 aa).

The signal sequence occupies residues 1-26; sequence MAGKVTVAFFMFAMIAFLANFGYVEC. Cystine bridges form between Cys40–Cys64, Cys44–Cys60, and Cys47–Cys75.

It belongs to the insect eclosion hormone family.

Its subcellular location is the secreted. Its function is as follows. Neuropeptide that triggers the performance of ecdysis behaviors at the end of a molt. It triggers adult behavior patterns: larval, pupal and adult ecdysis, and plasticization during the molt. The polypeptide is Eclosion hormone (Manduca sexta (Tobacco hawkmoth)).